Consider the following 1208-residue polypeptide: E3 ubiquitin-protein ligase DZIP3 (1208 aa).

Residues 10-29 (VRHPAVEDQRKEETENKLEK) are compositionally biased toward basic and acidic residues. 2 disordered regions span residues 10 to 38 (VRHP…NKQE) and 637 to 698 (GTSI…PHSV). Coiled-coil stretches lie at residues 14–43 (AVED…DIPT), 647–676 (ESLK…SKED), 792–853 (IASL…SKLN), and 904–939 (QLKA…KVKQ). Positions 637–647 (GTSIPSESSTE) are enriched in polar residues. Residues 648 to 657 (SLKDLQEVKS) show a composition bias toward basic and acidic residues. Residues 658-669 (KQRKKKKTKNKK) are compositionally biased toward basic residues. The span at 670 to 693 (NKDSKEDQVPYVVEKEEQLRKEQA) shows a compositional bias: basic and acidic residues. The interval 1088–1145 (KSQSQGKSVSNVNCVSPSHSPSQPDAAQPPKPAWRPLTSQGPATWEGASNPDEEEEEE) is disordered. Residues 1089-1112 (SQSQGKSVSNVNCVSPSHSPSQPD) show a composition bias toward polar residues. Residues 1148–1188 (CVICHENLSPENLSVLPCAHKFHAQCIRPWLMQQGTCPTCR) form an RING-type; atypical zinc finger.

Interacts with DAZ proteins. In terms of tissue distribution, widely expressed at low level. Highly expressed in skeletal muscle, kidney and heart. Expressed at low level in placenta, lung, brain, liver and pancreas.

The protein localises to the cytoplasm. The catalysed reaction is S-ubiquitinyl-[E2 ubiquitin-conjugating enzyme]-L-cysteine + [acceptor protein]-L-lysine = [E2 ubiquitin-conjugating enzyme]-L-cysteine + N(6)-ubiquitinyl-[acceptor protein]-L-lysine.. It functions in the pathway protein modification; protein ubiquitination. In terms of biological role, E3 Ubiquitin ligase proteins mediate ubiquitination and subsequent proteasomal degradation of target proteins. E3 ubiquitin ligases accept ubiquitin from an E2 ubiquitin-conjugating enzyme in the form of a thioester and then directly transfers the ubiquitin to targeted substrates. Able to specifically bind RNA. The protein is E3 ubiquitin-protein ligase DZIP3 (DZIP3) of Homo sapiens (Human).